The primary structure comprises 201 residues: Oligoribonuclease (201 aa).

An Exonuclease domain is found at 5–169; that stretch reads MVWIDCEMTG…ADIRDSITEL (165 aa). The active site involves Tyr126.

It belongs to the oligoribonuclease family.

The protein resides in the cytoplasm. Its function is as follows. 3'-to-5' exoribonuclease specific for small oligoribonucleotides. In Streptomyces griseus, this protein is Oligoribonuclease.